We begin with the raw amino-acid sequence, 322 residues long: Ribosomal RNA large subunit methyltransferase F (322 aa).

Belongs to the methyltransferase superfamily. METTL16/RlmF family.

The protein localises to the cytoplasm. The enzyme catalyses adenosine(1618) in 23S rRNA + S-adenosyl-L-methionine = N(6)-methyladenosine(1618) in 23S rRNA + S-adenosyl-L-homocysteine + H(+). Its function is as follows. Specifically methylates the adenine in position 1618 of 23S rRNA. This Cytophaga hutchinsonii (strain ATCC 33406 / DSM 1761 / CIP 103989 / NBRC 15051 / NCIMB 9469 / D465) protein is Ribosomal RNA large subunit methyltransferase F.